The chain runs to 591 residues: Homeobox domain-containing transcription factor HOB1 (591 aa).

The span at M1–E15 shows a compositional bias: basic and acidic residues. 2 disordered regions span residues M1 to G37 and I148 to A168. The homeobox DNA-binding region spans I176–E223. 2 disordered regions span residues D420–S463 and D543–E563. A compositionally biased stretch (acidic residues) spans Q427–Q441. The segment covering D543–A560 has biased composition (basic and acidic residues).

It is found in the nucleus. Its function is as follows. General stress-responsive transcription factor that governs multiple stress responses and adaptations. Plays a key role in virulence. Mediates the expression of LAC1, which is the major laccase involved in melanin synthesis. Positively regulates BZP4 induction under conditions of nutrient starvation and basal expression levels of MBS1 and USV101, 3 major transcription factors that independently contribute to melanin production. Also acts as a key regulator of ergosterol gene expression. The sequence is that of Homeobox domain-containing transcription factor HOB1 from Cryptococcus neoformans var. grubii serotype A (strain H99 / ATCC 208821 / CBS 10515 / FGSC 9487) (Filobasidiella neoformans var. grubii).